The primary structure comprises 560 residues: RNA polymerase-associated protein C651.09c (560 aa).

Disordered stretches follow at residues Asp15 to Tyr74 and Tyr128 to Gln207. Positions Gly148–Arg171 are enriched in basic and acidic residues. Positions Asp180–Gly195 are enriched in acidic residues. At Ser197 the chain carries Phosphoserine. Residues Ser214–Lys345 form the Plus3 domain. The stretch at Ala387 to Ala456 forms a coiled coil. Over residues Glu440–Arg449 the composition is skewed to basic and acidic residues. The disordered stretch occupies residues Glu440–Lys486. The span at Ser451–Ser480 shows a compositional bias: low complexity. Phosphoserine occurs at positions 502 and 506.

As to quaternary structure, component of the PAF1 complex.

Its subcellular location is the nucleus. The protein localises to the nucleoplasm. In terms of biological role, the PAF1 complex is a multifunctional complex. Involved in transcription initiation via genetic interactions with TATA-binding proteins. Involved in elongation. Also has a role in transcription-coupled histone modification. Important for TATA site selection by TBP. Directly or indirectly regulates the DNA-binding properties of the TATA box-binding protein, and the relative activities of different TATA elements. This is RNA polymerase-associated protein C651.09c from Schizosaccharomyces pombe (strain 972 / ATCC 24843) (Fission yeast).